The chain runs to 151 residues: NDYAELEGKWDTIAIAADNDAKIKEEGPLRLYVRELYCNEDCSEMEVTFYVNANNQCSKTTVIGYKQADGTYRTQFEGDNRFQPVYATPENIVFTSKNVDRAGQETNLIFVVGKSQPLTPEQHEKLVEFAHENNIPEENIHNVLATDTCPK.

2 disulfides stabilise this stretch: Cys-38-Cys-42 and Cys-57-Cys-149.

It belongs to the calycin superfamily. Lipocalin family. Expressed in salivary glands, hair and urine.

It localises to the secreted. In terms of biological role, may act as a pheromone. This is Odorant-binding protein from Phodopus sungorus (Striped hairy-footed hamster).